The following is a 43-amino-acid chain: Defensin-A (43 aa).

Intrachain disulfides connect C3–C34, C20–C39, and C24–C41.

It localises to the secreted. In terms of biological role, antibacterial protein. Strong activity against the Gram-positive bacteria M.luteus, B.megaterium and S.aureus. Reduced activity against Gram-positive bacterium B.subtilis and weak activity against Gram-negative bacterium X.japonicus. No detectable activity against the Gram-negative bacteria E.asbriae, E.coli, P.aeruginosa and S.marcescens. The protein is Defensin-A of Anomala cuprea (Cupreous chafer beetle).